A 467-amino-acid polypeptide reads, in one-letter code: Probable apyrase 2 (467 aa).

The Cytoplasmic portion of the chain corresponds to 1-25 (MRRYSALPGGGARPDTLADRLHRYR). The chain crosses the membrane as a helical; Signal-anchor for type II membrane protein span at residues 26–46 (GVLLVILAPLALVSLVLLLMP). Residues 47-467 (RSPASSSAAA…PLGSAIEVAS (421 aa)) are Extracellular-facing. 70 to 80 (VIFDAGSSGSR) lines the ATP pocket. The active-site Proton acceptor is the E192. 216 to 226 (GVVDLGGGSVQ) contacts ATP.

The protein belongs to the GDA1/CD39 NTPase family. Ca(2+) is required as a cofactor.

The protein resides in the membrane. It catalyses the reaction a ribonucleoside 5'-triphosphate + 2 H2O = a ribonucleoside 5'-phosphate + 2 phosphate + 2 H(+). Functionally, catalyzes the hydrolysis of phosphoanhydride bonds of nucleoside tri- and di-phosphates. The sequence is that of Probable apyrase 2 (APY2) from Oryza sativa subsp. japonica (Rice).